Here is a 57-residue protein sequence, read N- to C-terminus: UPF0509 protein YciZ (57 aa).

Belongs to the UPF0509 family.

The sequence is that of UPF0509 protein YciZ from Escherichia coli O127:H6 (strain E2348/69 / EPEC).